Here is a 438-residue protein sequence, read N- to C-terminus: DNA primase DnaG (438 aa).

One can recognise a Toprim domain in the interval 169-243; it reads DSIIVVEGRA…DIDYVARAPY (75 aa). Mg(2+)-binding residues include Glu175, Asp217, and Asp219.

Belongs to the archaeal DnaG primase family. As to quaternary structure, forms a ternary complex with MCM helicase and DNA. Requires Mg(2+) as cofactor.

The enzyme catalyses ssDNA + n NTP = ssDNA/pppN(pN)n-1 hybrid + (n-1) diphosphate.. In terms of biological role, RNA polymerase that catalyzes the synthesis of short RNA molecules used as primers for DNA polymerase during DNA replication. In Methanococcus maripaludis (strain C5 / ATCC BAA-1333), this protein is DNA primase DnaG.